A 438-amino-acid polypeptide reads, in one-letter code: chitinase-like effector (438 aa).

The N-terminal stretch at 1–23 (MFTPLSSVTALLALSSAFLGAQA) is a signal peptide. The region spanning 54–437 (FIAKGYYTGW…DAIRSGAGLS (384 aa)) is the GH18 domain. Trp416 is a binding site for chitin.

This sequence belongs to the glycosyl hydrolase 18 family.

The protein resides in the secreted. Functionally, catalytically impaired chitinase that binds efficiently to chitin, but not to chitosan, xylan, or cellulose. Despite the lack of chitinolytic activity, retains substrate binding specificity and acts as an effector to prevent chitin-triggered immunity by sequestering immunogenic chitin fragments. Does not function in the protection of fungal cell wall against plant hydrolytic enzymes. This is chitinase-like effector from Moniliophthora perniciosa (Witches'-broom disease fungus).